The sequence spans 522 residues: Cytochrome P450 9c1 (522 aa).

Cysteine 464 contributes to the heme binding site.

Belongs to the cytochrome P450 family. Requires heme as cofactor.

It localises to the endoplasmic reticulum membrane. The protein resides in the microsome membrane. In terms of biological role, may be involved in the metabolism of insect hormones and in the breakdown of synthetic insecticides. The sequence is that of Cytochrome P450 9c1 (Cyp9c1) from Drosophila melanogaster (Fruit fly).